Reading from the N-terminus, the 2068-residue chain is uncharacterized protein (2068 aa).

2 helical membrane passes run 3-23 (FFIIIFILLLSFFFFDYNFCS) and 51-71 (TIYLIFPFLQHIFVHIFYYYI). Over residues 975–998 (QMHSGEDEKEELGEPKEKGSKSCQ) the composition is skewed to basic and acidic residues. The tract at residues 975–1030 (QMHSGEDEKEELGEPKEKGSKSCQEEEEQDEEEEDEDEEEEEDQGVNNYDNYVDGV) is disordered. Over residues 999-1018 (EEEEQDEEEEDEDEEEEEDQ) the composition is skewed to acidic residues. Residues 1890 to 1910 (FLYNLSFIYNVYNYLILIYIY) traverse the membrane as a helical segment.

Its subcellular location is the membrane. This is an uncharacterized protein from Plasmodium falciparum (isolate 3D7).